The primary structure comprises 226 residues: Cytidylate kinase (226 aa).

Position 10 to 18 (10 to 18 (GPASSGKST)) interacts with ATP.

The protein belongs to the cytidylate kinase family. Type 1 subfamily.

It is found in the cytoplasm. The catalysed reaction is CMP + ATP = CDP + ADP. It carries out the reaction dCMP + ATP = dCDP + ADP. The protein is Cytidylate kinase of Streptococcus pyogenes serotype M4 (strain MGAS10750).